Consider the following 384-residue polypeptide: V-type proton ATPase subunit C 2 (384 aa).

It belongs to the V-ATPase C subunit family. V-ATPase is a heteromultimeric enzyme made up of two complexes: the ATP-hydrolytic V1 complex and the proton translocation V0 complex. The V1 complex consists of three catalytic AB heterodimers that form a heterohexamer, three peripheral stalks each consisting of EG heterodimers, one central rotor including subunits D and F, and the regulatory subunits C and H. The proton translocation complex V0 consists of the proton transport subunit a, a ring of proteolipid subunits c9c'', rotary subunit d, subunits e and f, and the accessory subunits vah-19/Ac45 and vah-20/PRR.

In terms of biological role, subunit of the V1 complex of vacuolar(H+)-ATPase (V-ATPase), a multisubunit enzyme composed of a peripheral complex (V1) that hydrolyzes ATP and a membrane integral complex (V0) that translocates protons. V-ATPase is responsible for acidifying and maintaining the pH of intracellular compartments and in some cell types, is targeted to the plasma membrane, where it is responsible for acidifying the extracellular environment. Subunit C is necessary for the assembly of the catalytic sector of the enzyme and is likely to have a specific function in its catalytic activity. The sequence is that of V-type proton ATPase subunit C 2 (VATC) from Ascidia sydneiensis samea (Vanadium-rich ascidian).